Here is a 335-residue protein sequence, read N- to C-terminus: Ornithine carbamoyltransferase, catabolic (335 aa).

Carbamoyl phosphate-binding positions include Ser59 to Thr62, Gln86, Arg110, and His137 to Gln140. L-ornithine contacts are provided by residues Asn169, Asp233, and Ser237–Met238. Carbamoyl phosphate is bound by residues Cys274 to Leu275 and Arg319.

The protein belongs to the aspartate/ornithine carbamoyltransferase superfamily. OTCase family.

It localises to the cytoplasm. The catalysed reaction is carbamoyl phosphate + L-ornithine = L-citrulline + phosphate + H(+). It participates in amino-acid degradation; L-arginine degradation via ADI pathway; carbamoyl phosphate from L-arginine: step 2/2. In terms of biological role, reversibly catalyzes the transfer of the carbamoyl group from carbamoyl phosphate (CP) to the N(epsilon) atom of ornithine (ORN) to produce L-citrulline. The chain is Ornithine carbamoyltransferase, catabolic (arcB) from Bacillus licheniformis (strain ATCC 14580 / DSM 13 / JCM 2505 / CCUG 7422 / NBRC 12200 / NCIMB 9375 / NCTC 10341 / NRRL NRS-1264 / Gibson 46).